The chain runs to 452 residues: Mitochondrial distribution and morphology protein 34 (452 aa).

In terms of domain architecture, SMP-LTD spans 1 to 196 (MSFRVKGWSD…LPSIIYKMSR (196 aa)).

The protein belongs to the MDM34 family. In terms of assembly, component of the ER-mitochondria encounter structure (ERMES) or MDM complex, composed of mmm1, mdm10, mdm12 and mdm34.

The protein resides in the mitochondrion outer membrane. In terms of biological role, component of the ERMES/MDM complex, which serves as a molecular tether to connect the endoplasmic reticulum (ER) and mitochondria. Components of this complex are involved in the control of mitochondrial shape and protein biogenesis, and function in nonvesicular lipid trafficking between the ER and mitochondria. Mdm34 is required for the interaction of the ER-resident membrane protein mmm1 and the outer mitochondrial membrane-resident beta-barrel protein mdm10. The protein is Mitochondrial distribution and morphology protein 34 of Schizosaccharomyces pombe (strain 972 / ATCC 24843) (Fission yeast).